Reading from the N-terminus, the 229-residue chain is Cell division protein FtsQ (229 aa).

A helical membrane pass occupies residues 1-21 (MIVLLCVIFAFLVYSNWHSWL). Residues 22–229 (ESLDRNPIRA…AAVGFSPLPK (208 aa)) are Periplasmic-facing. One can recognise a POTRA domain in the interval 27-97 (NPIRAYALTH…DRLSITLIEH (71 aa)).

Belongs to the FtsQ/DivIB family. FtsQ subfamily. In terms of assembly, part of a complex composed of FtsB, FtsL and FtsQ.

Its subcellular location is the cell inner membrane. Its function is as follows. Essential cell division protein. May link together the upstream cell division proteins, which are predominantly cytoplasmic, with the downstream cell division proteins, which are predominantly periplasmic. May control correct divisome assembly. The polypeptide is Cell division protein FtsQ (Actinobacillus pleuropneumoniae serotype 3 (strain JL03)).